Here is a 207-residue protein sequence, read N- to C-terminus: 3-isopropylmalate dehydratase small subunit (207 aa).

It belongs to the LeuD family. LeuD type 1 subfamily. As to quaternary structure, heterodimer of LeuC and LeuD.

The catalysed reaction is (2R,3S)-3-isopropylmalate = (2S)-2-isopropylmalate. It participates in amino-acid biosynthesis; L-leucine biosynthesis; L-leucine from 3-methyl-2-oxobutanoate: step 2/4. Functionally, catalyzes the isomerization between 2-isopropylmalate and 3-isopropylmalate, via the formation of 2-isopropylmaleate. The protein is 3-isopropylmalate dehydratase small subunit of Gluconacetobacter diazotrophicus (strain ATCC 49037 / DSM 5601 / CCUG 37298 / CIP 103539 / LMG 7603 / PAl5).